The primary structure comprises 468 residues: 3-isopropylmalate dehydratase large subunit (468 aa).

[4Fe-4S] cluster is bound by residues C347, C407, and C410.

Belongs to the aconitase/IPM isomerase family. LeuC type 1 subfamily. As to quaternary structure, heterodimer of LeuC and LeuD. The cofactor is [4Fe-4S] cluster.

The catalysed reaction is (2R,3S)-3-isopropylmalate = (2S)-2-isopropylmalate. Its pathway is amino-acid biosynthesis; L-leucine biosynthesis; L-leucine from 3-methyl-2-oxobutanoate: step 2/4. Functionally, catalyzes the isomerization between 2-isopropylmalate and 3-isopropylmalate, via the formation of 2-isopropylmaleate. This Synechocystis sp. (strain ATCC 27184 / PCC 6803 / Kazusa) protein is 3-isopropylmalate dehydratase large subunit.